Here is a 155-residue protein sequence, read N- to C-terminus: Protein-export protein SecB (155 aa).

This sequence belongs to the SecB family. As to quaternary structure, homotetramer, a dimer of dimers. One homotetramer interacts with 1 SecA dimer.

The protein localises to the cytoplasm. Its function is as follows. One of the proteins required for the normal export of preproteins out of the cell cytoplasm. It is a molecular chaperone that binds to a subset of precursor proteins, maintaining them in a translocation-competent state. It also specifically binds to its receptor SecA. This is Protein-export protein SecB from Salmonella heidelberg (strain SL476).